The following is a 103-amino-acid chain: UPF0145 protein BCE_5284 (103 aa).

It belongs to the UPF0145 family.

In Bacillus cereus (strain ATCC 10987 / NRS 248), this protein is UPF0145 protein BCE_5284.